The following is a 379-amino-acid chain: Cysteine-rich receptor-like protein kinase 44 (379 aa).

Residues 56–336 (FSPYNHLGEG…VRMLNANSFT (281 aa)) enclose the Protein kinase domain. Residues 62–70 (LGEGGFGAV) and lysine 84 contribute to the ATP site. Tyrosine 129 is subject to Phosphotyrosine. The active-site Proton acceptor is aspartate 181. At serine 185 the chain carries Phosphoserine. Residue threonine 223 is modified to Phosphothreonine. Residue tyrosine 231 is modified to Phosphotyrosine.

It belongs to the protein kinase superfamily. Ser/Thr protein kinase family. CRK subfamily.

It carries out the reaction L-seryl-[protein] + ATP = O-phospho-L-seryl-[protein] + ADP + H(+). The enzyme catalyses L-threonyl-[protein] + ATP = O-phospho-L-threonyl-[protein] + ADP + H(+). This is Cysteine-rich receptor-like protein kinase 44 from Arabidopsis thaliana (Mouse-ear cress).